A 926-amino-acid chain; its full sequence is Serine/threonine-protein kinase pakE (926 aa).

Positions Ser36 to Pro55 are enriched in polar residues. Disordered stretches follow at residues Ser36–Leu257 and Gln546–Thr576. Residues Asn56–Asn107 are compositionally biased toward low complexity. The segment covering Thr108 to Lys117 has biased composition (polar residues). Positions Asn134–Ser173 are enriched in low complexity. Residues Arg183–Arg204 are compositionally biased toward polar residues. A compositionally biased stretch (low complexity) spans Pro215 to Asn253. A coiled-coil region spans residues Leu534–Asn567. The 254-residue stretch at Phe650–Ile903 folds into the Protein kinase domain. Residues Leu656–Val664 and Lys679 each bind ATP. The Proton acceptor role is filled by Asp771.

This sequence belongs to the protein kinase superfamily. STE Ser/Thr protein kinase family. STE20 subfamily. The cofactor is Mg(2+).

The catalysed reaction is L-seryl-[protein] + ATP = O-phospho-L-seryl-[protein] + ADP + H(+). The enzyme catalyses L-threonyl-[protein] + ATP = O-phospho-L-threonyl-[protein] + ADP + H(+). In terms of biological role, may play a role in responding to changes in chemoattractant levels. The protein is Serine/threonine-protein kinase pakE of Dictyostelium discoideum (Social amoeba).